The chain runs to 470 residues: Glutamyl-tRNA(Gln) amidotransferase subunit A (470 aa).

Catalysis depends on charge relay system residues Lys-71 and Ser-146. Ser-170 functions as the Acyl-ester intermediate in the catalytic mechanism.

It belongs to the amidase family. GatA subfamily. Heterotrimer of A, B and C subunits.

It catalyses the reaction L-glutamyl-tRNA(Gln) + L-glutamine + ATP + H2O = L-glutaminyl-tRNA(Gln) + L-glutamate + ADP + phosphate + H(+). Its function is as follows. Allows the formation of correctly charged Gln-tRNA(Gln) through the transamidation of misacylated Glu-tRNA(Gln) in organisms which lack glutaminyl-tRNA synthetase. The reaction takes place in the presence of glutamine and ATP through an activated gamma-phospho-Glu-tRNA(Gln). The chain is Glutamyl-tRNA(Gln) amidotransferase subunit A from Akkermansia muciniphila (strain ATCC BAA-835 / DSM 22959 / JCM 33894 / BCRC 81048 / CCUG 64013 / CIP 107961 / Muc).